The following is a 108-amino-acid chain: uncharacterized protein (108 aa).

Positions 1–20 (MNLKSIIFVLFIAFFAFSLA) are cleaved as a signal peptide. Residue N39 is glycosylated (N-linked (GlcNAc...) asparagine).

Belongs to the Dictyostelium gerABC family.

Its subcellular location is the secreted. This is an uncharacterized protein from Dictyostelium discoideum (Social amoeba).